We begin with the raw amino-acid sequence, 445 residues long: 3-phosphoshikimate 1-carboxyvinyltransferase (445 aa).

The interval 1–25 (MSHSDQTSPLEARKSAALSGTARVP) is disordered. 3-phosphoshikimate contacts are provided by K28, S29, and R33. K28 contributes to the phosphoenolpyruvate binding site. 2 residues coordinate phosphoenolpyruvate: G101 and R129. 3-phosphoshikimate contacts are provided by S175, Q177, D328, and K355. Residue Q177 participates in phosphoenolpyruvate binding. D328 (proton acceptor) is an active-site residue. Phosphoenolpyruvate is bound by residues R359 and R402.

This sequence belongs to the EPSP synthase family. As to quaternary structure, monomer.

The protein resides in the cytoplasm. The catalysed reaction is 3-phosphoshikimate + phosphoenolpyruvate = 5-O-(1-carboxyvinyl)-3-phosphoshikimate + phosphate. Its pathway is metabolic intermediate biosynthesis; chorismate biosynthesis; chorismate from D-erythrose 4-phosphate and phosphoenolpyruvate: step 6/7. Functionally, catalyzes the transfer of the enolpyruvyl moiety of phosphoenolpyruvate (PEP) to the 5-hydroxyl of shikimate-3-phosphate (S3P) to produce enolpyruvyl shikimate-3-phosphate and inorganic phosphate. The polypeptide is 3-phosphoshikimate 1-carboxyvinyltransferase (Rhodopseudomonas palustris (strain BisB5)).